Here is a 100-residue protein sequence, read N- to C-terminus: Cell division protein FtsB (100 aa).

Residues Met-1–Gln-3 are Cytoplasmic-facing. A helical transmembrane segment spans residues Leu-4–Leu-21. The Periplasmic portion of the chain corresponds to Gly-22 to Arg-100. Residues Arg-49–Asn-73 are a coiled coil.

This sequence belongs to the FtsB family. In terms of assembly, part of a complex composed of FtsB, FtsL and FtsQ.

It localises to the cell inner membrane. Its function is as follows. Essential cell division protein. May link together the upstream cell division proteins, which are predominantly cytoplasmic, with the downstream cell division proteins, which are predominantly periplasmic. The chain is Cell division protein FtsB from Shewanella frigidimarina (strain NCIMB 400).